A 293-amino-acid chain; its full sequence is Cytidine deaminase (293 aa).

2 CMP/dCMP-type deaminase domains span residues Asp-47 to Ala-166 and Val-186 to Val-293. Position 88-90 (Asn-88–Glu-90) interacts with substrate. Zn(2+) is bound at residue His-101. Catalysis depends on Glu-103, which acts as the Proton donor. 2 residues coordinate Zn(2+): Cys-128 and Cys-131.

It belongs to the cytidine and deoxycytidylate deaminase family. Homodimer. The cofactor is Zn(2+).

The enzyme catalyses cytidine + H2O + H(+) = uridine + NH4(+). It carries out the reaction 2'-deoxycytidine + H2O + H(+) = 2'-deoxyuridine + NH4(+). Functionally, this enzyme scavenges exogenous and endogenous cytidine and 2'-deoxycytidine for UMP synthesis. This Aeromonas hydrophila subsp. hydrophila (strain ATCC 7966 / DSM 30187 / BCRC 13018 / CCUG 14551 / JCM 1027 / KCTC 2358 / NCIMB 9240 / NCTC 8049) protein is Cytidine deaminase.